Reading from the N-terminus, the 132-residue chain is Large ribosomal subunit protein bL12 (132 aa).

The interval 112–132 is disordered; it reads KEAADKAKTQLEGAGGTINLK.

This sequence belongs to the bacterial ribosomal protein bL12 family. Homodimer. Part of the ribosomal stalk of the 50S ribosomal subunit. Forms a multimeric L10(L12)X complex, where L10 forms an elongated spine to which 2 to 4 L12 dimers bind in a sequential fashion. Binds GTP-bound translation factors.

In terms of biological role, forms part of the ribosomal stalk which helps the ribosome interact with GTP-bound translation factors. Is thus essential for accurate translation. In Leifsonia xyli subsp. xyli (strain CTCB07), this protein is Large ribosomal subunit protein bL12.